Here is an 80-residue protein sequence, read N- to C-terminus: Large ribosomal subunit protein bL31B (80 aa).

This sequence belongs to the bacterial ribosomal protein bL31 family. Type B subfamily. In terms of assembly, part of the 50S ribosomal subunit.

The chain is Large ribosomal subunit protein bL31B from Streptococcus mutans serotype c (strain ATCC 700610 / UA159).